A 443-amino-acid chain; its full sequence is Transcription factor E2F2 (443 aa).

The disordered stretch occupies residues Met1–Leu22. Residues Ala67–Pro107 form a cyclin A/CDK2 binding region. Residues Gly109 to Glu198 mediate DNA binding. The interval Leu157–Leu178 is leucine-zipper. Positions Glu162 to Glu198 match the DEF box motif. The interval Leu199–Ile291 is dimerization. Positions Pro306–Ser341 are disordered. Residues Pro361–Asn443 are transactivation. Residues Asp416–Asp433 form a retinoblastoma protein binding region.

It belongs to the E2F/DP family. Component of the DRTF1/E2F transcription factor complex. Forms heterodimers with DP family members. The E2F2 complex binds specifically hypophosphorylated retinoblastoma protein RB1. During the cell cycle, RB1 becomes phosphorylated in mid-to-late G1 phase, detaches from the DRTF1/E2F complex, rendering E2F transcriptionally active. Viral oncoproteins, notably E1A, T-antigen and HPV E7, are capable of sequestering RB protein, thus releasing the active complex. Binds EAPP. In terms of processing, phosphorylated by CDK2 and cyclin A-CDK2 in the S-phase.

The protein resides in the nucleus. Functionally, transcription activator that binds DNA cooperatively with DP proteins through the E2 recognition site, 5'-TTTC[CG]CGC-3' found in the promoter region of a number of genes whose products are involved in cell cycle regulation or in DNA replication. The DRTF1/E2F complex functions in the control of cell-cycle progression from g1 to s phase. E2F2 binds specifically to RB1 in a cell-cycle dependent manner. The chain is Transcription factor E2F2 (E2f2) from Mus musculus (Mouse).